We begin with the raw amino-acid sequence, 416 residues long: Gamma-glutamyl phosphate reductase (416 aa).

The protein belongs to the gamma-glutamyl phosphate reductase family.

It is found in the cytoplasm. The enzyme catalyses L-glutamate 5-semialdehyde + phosphate + NADP(+) = L-glutamyl 5-phosphate + NADPH + H(+). It functions in the pathway amino-acid biosynthesis; L-proline biosynthesis; L-glutamate 5-semialdehyde from L-glutamate: step 2/2. Its function is as follows. Catalyzes the NADPH-dependent reduction of L-glutamate 5-phosphate into L-glutamate 5-semialdehyde and phosphate. The product spontaneously undergoes cyclization to form 1-pyrroline-5-carboxylate. The polypeptide is Gamma-glutamyl phosphate reductase (Vibrio parahaemolyticus serotype O3:K6 (strain RIMD 2210633)).